The primary structure comprises 143 residues: MAARNKARKRAFQILFEADQRGESVQSVLADWVRLSRTDDRQPPVGEFTMELVEGYAQYADRIDDLIVTYAVDWEIDRMPVVDRSILRLGAYELIWMDGTPDAVVIDEAVQLAKEFSTDDSPSFVNGLLARFKDLKPNLRREQ.

This sequence belongs to the NusB family.

Functionally, involved in transcription antitermination. Required for transcription of ribosomal RNA (rRNA) genes. Binds specifically to the boxA antiterminator sequence of the ribosomal RNA (rrn) operons. This chain is Transcription antitermination protein NusB, found in Streptomyces griseus subsp. griseus (strain JCM 4626 / CBS 651.72 / NBRC 13350 / KCC S-0626 / ISP 5235).